The primary structure comprises 736 residues: uncharacterized protein (736 aa).

ABC transporter domains lie at 183–459 (IKID…KQME) and 518–734 (LQMS…TMTI). ATP contacts are provided by residues 215–222 (GRNGIGKS) and 551–558 (GPNGAGKS).

The protein belongs to the ABC transporter superfamily.

The protein resides in the cytoplasm. This is an uncharacterized protein from Schizosaccharomyces pombe (strain 972 / ATCC 24843) (Fission yeast).